Consider the following 451-residue polypeptide: Uronate isomerase (451 aa).

This sequence belongs to the metallo-dependent hydrolases superfamily. Uronate isomerase family.

It carries out the reaction D-glucuronate = D-fructuronate. It catalyses the reaction aldehydo-D-galacturonate = keto-D-tagaturonate. The protein operates within carbohydrate metabolism; pentose and glucuronate interconversion. This Thermotoga sp. (strain RQ2) protein is Uronate isomerase.